Reading from the N-terminus, the 76-residue chain is UPF0154 protein Exig_1099 (76 aa).

Residues 4–24 (WIWILIALLCLVAGVALGFYI) traverse the membrane as a helical segment. The disordered stretch occupies residues 54-76 (KPSQKKVNQVMRSMSGSMKSPKK).

It belongs to the UPF0154 family.

The protein localises to the cell membrane. The sequence is that of UPF0154 protein Exig_1099 from Exiguobacterium sibiricum (strain DSM 17290 / CCUG 55495 / CIP 109462 / JCM 13490 / 255-15).